Reading from the N-terminus, the 239-residue chain is Lactate utilization protein A 1 (239 aa).

This sequence belongs to the LutA/YkgE family.

In terms of biological role, is involved in L-lactate degradation and allows cells to grow with lactate as the sole carbon source. In Bacillus cereus (strain AH820), this protein is Lactate utilization protein A 1.